Consider the following 452-residue polypeptide: Phosphoglucosamine mutase (452 aa).

Serine 104 serves as the catalytic Phosphoserine intermediate. Mg(2+) is bound by residues serine 104, aspartate 245, aspartate 247, and aspartate 249. Position 104 is a phosphoserine (serine 104).

Belongs to the phosphohexose mutase family. Mg(2+) serves as cofactor. Post-translationally, activated by phosphorylation.

It carries out the reaction alpha-D-glucosamine 1-phosphate = D-glucosamine 6-phosphate. Catalyzes the conversion of glucosamine-6-phosphate to glucosamine-1-phosphate. The sequence is that of Phosphoglucosamine mutase from Gluconacetobacter diazotrophicus (strain ATCC 49037 / DSM 5601 / CCUG 37298 / CIP 103539 / LMG 7603 / PAl5).